Here is a 395-residue protein sequence, read N- to C-terminus: Tyrosine--tRNA ligase (395 aa).

A 'HIGH' region motif is present at residues 42 to 51 (PTAPDIHLGH). A 'KMSKS' region motif is present at residues 226–230 (KMSKS). Residue K229 participates in ATP binding. Residues 334–394 (IGLANLLKEA…GKRKFARVTV (61 aa)) form the S4 RNA-binding domain.

Belongs to the class-I aminoacyl-tRNA synthetase family. TyrS type 2 subfamily. As to quaternary structure, homodimer.

The protein localises to the cytoplasm. It carries out the reaction tRNA(Tyr) + L-tyrosine + ATP = L-tyrosyl-tRNA(Tyr) + AMP + diphosphate + H(+). In terms of biological role, catalyzes the attachment of tyrosine to tRNA(Tyr) in a two-step reaction: tyrosine is first activated by ATP to form Tyr-AMP and then transferred to the acceptor end of tRNA(Tyr). The polypeptide is Tyrosine--tRNA ligase (Mannheimia succiniciproducens (strain KCTC 0769BP / MBEL55E)).